Reading from the N-terminus, the 196-residue chain is uncharacterized protein (196 aa).

The first 23 residues, 1-23 (MSARAPKELRLALPPCLLNRTFA), serve as a signal peptide directing secretion. Residues Asn-19 and Asn-26 are each glycosylated (N-linked (GlcNAc...) asparagine). The Extracellular portion of the chain corresponds to 24-60 (SHNASGGSNAGIRSSGAGGGTCITQVGQQLFQSFSST). Residues 61 to 81 (LVLIVLVTLIFCLIVLSLSTF) traverse the membrane as a helical segment. The Cytoplasmic portion of the chain corresponds to 82 to 196 (HIHKRRMKKR…EGLLQTVVLS (115 aa)). The tract at residues 93–184 (MQRAQEEYER…AHAASSCLDT (92 aa)) is disordered. 2 stretches are compositionally biased toward basic and acidic residues: residues 95-106 (RAQEEYERDHCS) and 124-135 (HGKETRLERQPR). Positions 161-171 (CAPPPPPPVPS) are enriched in pro residues. Over residues 172-181 (PHGAHAASSC) the composition is skewed to low complexity.

It is found in the membrane. This is an uncharacterized protein from Rattus norvegicus (Rat).